Here is a 671-residue protein sequence, read N- to C-terminus: DNA polymerase kappa (671 aa).

Residues tryptophan 105–glycine 285 enclose the UmuC domain. Positions 109 and 200 each coordinate Mg(2+). Glutamate 201 is a catalytic residue. The UBZ3-type zinc-finger motif lies at tyrosine 576–glutamate 613. Positions 583, 586, 601, and 605 each coordinate Zn(2+). The interval alanine 607–lysine 671 is disordered. The Nuclear localization signal motif lies at lysine 625 to glutamate 632. Positions leucine 629–lysine 650 are enriched in basic and acidic residues. Polar residues predominate over residues threonine 659–lysine 671.

This sequence belongs to the DNA polymerase type-Y family. Mg(2+) serves as cofactor. As to expression, expressed in roots, leaves, stems, flowers and siliques. Present in endoreduplicating cells.

It localises to the nucleus. The catalysed reaction is DNA(n) + a 2'-deoxyribonucleoside 5'-triphosphate = DNA(n+1) + diphosphate. Its activity is regulated as follows. Unable to bypass a single 1,N(6)-ethenoadenine (epsilon-dA) or an abasic site lesions in DNA templates. Its function is as follows. Template-directed low-fidelity DNA polymerase specifically involved in DNA repair. Able to extend primer-terminal mispairs, and to insert nucleotides opposite to a single 7,8-dihydro-8-oxoGuanine (8-oxoG) lesion and moderately extend from the resulting primer end, thus leading to both error-free and error-prone bypass of 8-oxoG DNA lesions. Probably involved in consecutive DNA replication cycles in the absence of mitosis. Binds preferentially template-primer DNA substrates or single-stranded DNA. Plays an important role in translesion synthesis, where the normal high-fidelity DNA polymerases cannot proceed and DNA synthesis stalls. Depending on the context, it inserts the correct base, but causes frequent base transitions, transversions and frameshifts. This Arabidopsis thaliana (Mouse-ear cress) protein is DNA polymerase kappa.